Reading from the N-terminus, the 510-residue chain is GTPase Der (510 aa).

EngA-type G domains are found at residues 3–167 and 230–405; these read LKLA…GPEA and IRLA…KDWT. Residues 9 to 16, 56 to 60, 119 to 122, 236 to 243, 283 to 287, and 348 to 351 each bind GTP; these read GRPNVGKS, DTAGF, NKAE, GRPNAGKS, DTAGL, and SKWD. A KH-like domain is found at 406–490; it reads ARAKTGDLNR…PIRLFVRQGK (85 aa).

It belongs to the TRAFAC class TrmE-Era-EngA-EngB-Septin-like GTPase superfamily. EngA (Der) GTPase family. As to quaternary structure, associates with the 50S ribosomal subunit.

In terms of biological role, GTPase that plays an essential role in the late steps of ribosome biogenesis. The polypeptide is GTPase Der (Hyphomonas neptunium (strain ATCC 15444)).